Consider the following 141-residue polypeptide: Lutropin subunit beta (141 aa).

Positions 1 to 20 (MEMFQGLLLWLLLGVAGVWA) are cleaved as a signal peptide. Disulfide bonds link Cys29-Cys77, Cys43-Cys92, Cys46-Cys130, Cys54-Cys108, Cys58-Cys110, and Cys113-Cys120. Asn33 is a glycosylation site (N-linked (GlcNAc...) asparagine).

This sequence belongs to the glycoprotein hormones subunit beta family. In terms of assembly, heterodimer of a common alpha chain and a unique beta chain which confers biological specificity to thyrotropin, lutropin, follitropin and gonadotropin.

It localises to the secreted. In terms of biological role, promotes spermatogenesis and ovulation by stimulating the testes and ovaries to synthesize steroids. This is Lutropin subunit beta (LHB) from Bos taurus (Bovine).